A 191-amino-acid chain; its full sequence is Inosine triphosphate pyrophosphatase (191 aa).

An ITP-binding site is contributed by T15–K20. Position 43 (E43) interacts with Mg(2+). Residues K55, D71 to T72, K88, F147 to D150, K168, and H173 to R174 each bind ITP.

The protein belongs to the HAM1 NTPase family. In terms of assembly, homodimer. The cofactor is Mg(2+). Requires Mn(2+) as cofactor.

The protein resides in the cytoplasm. It is found in the nucleus. The enzyme catalyses ITP + H2O = IMP + diphosphate + H(+). The catalysed reaction is dITP + H2O = dIMP + diphosphate + H(+). It carries out the reaction XTP + H2O = XMP + diphosphate + H(+). Its function is as follows. Pyrophosphatase that hydrolyzes non-canonical purine nucleotides such as inosine triphosphate (ITP), deoxyinosine triphosphate (dITP) or xanthosine 5'-triphosphate (XTP) to their respective monophosphate derivatives. The enzyme does not distinguish between the deoxy- and ribose forms. Probably excludes non-canonical purines from RNA and DNA precursor pools, thus preventing their incorporation into RNA and DNA and avoiding chromosomal lesions. This Neurospora crassa (strain ATCC 24698 / 74-OR23-1A / CBS 708.71 / DSM 1257 / FGSC 987) protein is Inosine triphosphate pyrophosphatase.